A 1076-amino-acid chain; its full sequence is Bifunctional glutamine synthetase adenylyltransferase/adenylyl-removing enzyme (1076 aa).

Positions 1-521 (MESSMFKPSS…LHLDIYYRPM (521 aa)) are adenylyl removase. The tract at residues 524–1076 (VNAQMENDQI…LERNRRRAQR (553 aa)) is adenylyl transferase. Residues 1041–1056 (ATATASAATPQPQTAP) show a composition bias toward low complexity. The tract at residues 1041 to 1076 (ATATASAATPQPQTAPRPRMHVIAPRLERNRRRAQR) is disordered.

Belongs to the GlnE family. Mg(2+) serves as cofactor.

The enzyme catalyses [glutamine synthetase]-O(4)-(5'-adenylyl)-L-tyrosine + phosphate = [glutamine synthetase]-L-tyrosine + ADP. It carries out the reaction [glutamine synthetase]-L-tyrosine + ATP = [glutamine synthetase]-O(4)-(5'-adenylyl)-L-tyrosine + diphosphate. Its function is as follows. Involved in the regulation of glutamine synthetase GlnA, a key enzyme in the process to assimilate ammonia. When cellular nitrogen levels are high, the C-terminal adenylyl transferase (AT) inactivates GlnA by covalent transfer of an adenylyl group from ATP to specific tyrosine residue of GlnA, thus reducing its activity. Conversely, when nitrogen levels are low, the N-terminal adenylyl removase (AR) activates GlnA by removing the adenylyl group by phosphorolysis, increasing its activity. The regulatory region of GlnE binds the signal transduction protein PII (GlnB) which indicates the nitrogen status of the cell. The sequence is that of Bifunctional glutamine synthetase adenylyltransferase/adenylyl-removing enzyme from Bifidobacterium longum subsp. infantis (strain ATCC 15697 / DSM 20088 / JCM 1222 / NCTC 11817 / S12).